We begin with the raw amino-acid sequence, 339 residues long: Undecaprenyl-phosphate 4-deoxy-4-formamido-L-arabinose transferase (339 aa).

2 consecutive transmembrane segments (helical) span residues 235-255 (LSII…MLIV) and 270-290 (FVLF…MGLL).

The protein belongs to the glycosyltransferase 2 family.

The protein resides in the cell inner membrane. It catalyses the reaction UDP-4-deoxy-4-formamido-beta-L-arabinose + di-trans,octa-cis-undecaprenyl phosphate = 4-deoxy-4-formamido-alpha-L-arabinopyranosyl di-trans,octa-cis-undecaprenyl phosphate + UDP. Its pathway is glycolipid biosynthesis; 4-amino-4-deoxy-alpha-L-arabinose undecaprenyl phosphate biosynthesis; 4-amino-4-deoxy-alpha-L-arabinose undecaprenyl phosphate from UDP-4-deoxy-4-formamido-beta-L-arabinose and undecaprenyl phosphate: step 1/2. The protein operates within bacterial outer membrane biogenesis; lipopolysaccharide biosynthesis. Catalyzes the transfer of 4-deoxy-4-formamido-L-arabinose from UDP to undecaprenyl phosphate. The modified arabinose is attached to lipid A and is required for resistance to polymyxin and cationic antimicrobial peptides. In Pseudomonas fluorescens (strain ATCC BAA-477 / NRRL B-23932 / Pf-5), this protein is Undecaprenyl-phosphate 4-deoxy-4-formamido-L-arabinose transferase.